Here is a 127-residue protein sequence, read N- to C-terminus: Large ribosomal subunit protein bL19 (127 aa).

Belongs to the bacterial ribosomal protein bL19 family.

In terms of biological role, this protein is located at the 30S-50S ribosomal subunit interface and may play a role in the structure and function of the aminoacyl-tRNA binding site. The chain is Large ribosomal subunit protein bL19 from Bradyrhizobium sp. (strain BTAi1 / ATCC BAA-1182).